The primary structure comprises 59 residues: UPF0509 protein KPK_3153 (59 aa).

Belongs to the UPF0509 family.

This chain is UPF0509 protein KPK_3153, found in Klebsiella pneumoniae (strain 342).